We begin with the raw amino-acid sequence, 144 residues long: Aspartate carbamoyltransferase regulatory chain (144 aa).

Zn(2+)-binding residues include Cys103, Cys108, Cys132, and Cys135.

It belongs to the PyrI family. Contains catalytic and regulatory chains. Requires Zn(2+) as cofactor.

Functionally, involved in allosteric regulation of aspartate carbamoyltransferase. The protein is Aspartate carbamoyltransferase regulatory chain of Clostridium tetani (strain Massachusetts / E88).